The sequence spans 452 residues: Glutamate--tRNA ligase 2 (452 aa).

The short motif at 8–18 is the 'HIGH' region element; that stretch reads PSPTGRLHVGN. Positions 246–250 match the 'KMSKS' region motif; it reads KLSKR. Lys-249 contributes to the ATP binding site.

This sequence belongs to the class-I aminoacyl-tRNA synthetase family. Glutamate--tRNA ligase type 1 subfamily. As to quaternary structure, monomer.

It is found in the cytoplasm. The catalysed reaction is tRNA(Glu) + L-glutamate + ATP = L-glutamyl-tRNA(Glu) + AMP + diphosphate. Catalyzes the attachment of glutamate to tRNA(Glu) in a two-step reaction: glutamate is first activated by ATP to form Glu-AMP and then transferred to the acceptor end of tRNA(Glu). The chain is Glutamate--tRNA ligase 2 from Erythrobacter litoralis (strain HTCC2594).